The primary structure comprises 491 residues: Cobyric acid synthase (491 aa).

A GATase cobBQ-type domain is found at 249-439 (PIDIAVIKLP…IHGVFDGVEF (191 aa)). The active-site Nucleophile is Cys329. His431 is a catalytic residue.

It belongs to the CobB/CobQ family. CobQ subfamily.

Its pathway is cofactor biosynthesis; adenosylcobalamin biosynthesis. In terms of biological role, catalyzes amidations at positions B, D, E, and G on adenosylcobyrinic A,C-diamide. NH(2) groups are provided by glutamine, and one molecule of ATP is hydrogenolyzed for each amidation. This is Cobyric acid synthase from Clostridium tetani (strain Massachusetts / E88).